Here is a 310-residue protein sequence, read N- to C-terminus: MKTLTRKISRTVITLLLVIIAIVLIFRIWVFYTESPWTRDAKFTADVVAIAPDVSGLISEVRVRDNQLVQKDQVLFTIDPPRYQKALDEAQADVAYYQAVMGEKRREAARRNQLGVSAMSREAIEQANNDYQTTEHQLAKAVASRDLAQLDLERTVVKAPSAGWVTNLNVYTGEFITRGSTSVALVKQNSFYVLAYLEETKLEGIRPGYRVEITPLGSNQVLRGSVDSIAAGVTNSSSTVDSKGMATIDSNLEWVRLAQRVPVRIHLDSQPGNQYPSGTTATVVVTGAQDRKDNDMPPLMKLIHRLREFG.

The chain crosses the membrane as a helical span at residues 12–32; that stretch reads VITLLLVIIAIVLIFRIWVFY.

This sequence belongs to the membrane fusion protein (MFP) (TC 8.A.1) family.

Its subcellular location is the cell inner membrane. Its function is as follows. Forms an efflux pump with AaeB. This is p-hydroxybenzoic acid efflux pump subunit AaeA from Erwinia tasmaniensis (strain DSM 17950 / CFBP 7177 / CIP 109463 / NCPPB 4357 / Et1/99).